A 396-amino-acid polypeptide reads, in one-letter code: Elongation factor Tu 2 (396 aa).

Residues 10–206 (KPHCNVGTIG…AVDDYIPQPE (197 aa)) form the tr-type G domain. Residues 19 to 26 (GHVDHGKT) are G1. Residue 19–26 (GHVDHGKT) participates in GTP binding. Mg(2+) is bound at residue Thr-26. The G2 stretch occupies residues 60–64 (GITIS). Residues 81-84 (DCPG) are G3. GTP is bound by residues 81–85 (DCPGH) and 136–139 (NKCD). Positions 136 to 139 (NKCD) are G4. Positions 174-176 (SAL) are G5.

The protein belongs to the TRAFAC class translation factor GTPase superfamily. Classic translation factor GTPase family. EF-Tu/EF-1A subfamily. In terms of assembly, monomer.

The protein resides in the cytoplasm. It carries out the reaction GTP + H2O = GDP + phosphate + H(+). In terms of biological role, GTP hydrolase that promotes the GTP-dependent binding of aminoacyl-tRNA to the A-site of ribosomes during protein biosynthesis. The protein is Elongation factor Tu 2 of Rhodospirillum rubrum (strain ATCC 11170 / ATH 1.1.1 / DSM 467 / LMG 4362 / NCIMB 8255 / S1).